An 87-amino-acid polypeptide reads, in one-letter code: FXYD domain-containing ion transport regulator 3 (87 aa).

Residues 1–20 (MQKVTLGLLVFLAGFPVLDA) form the signal peptide. The Extracellular portion of the chain corresponds to 21–38 (NDLEDKNSPFYYDWHSLQ). The helical transmembrane segment at 39–59 (VGGLICAGVLCAMGIIIVMSA) threads the bilayer. The Cytoplasmic segment spans residues 60–87 (KCKCKFGQKSGHHPGETPPLITPGSAQS). Residues 66–87 (GQKSGHHPGETPPLITPGSAQS) form a disordered region.

It belongs to the FXYD family. In terms of assembly, regulatory subunit of the sodium/potassium-transporting ATPase which is composed of a catalytic alpha subunit, a non-catalytic beta subunit and an additional regulatory subunit. Interacts with catalytic alpha subunit ATP1A1. Also interacts with non-catalytic beta subunit ATP1B1. Interacts with the ATP1A1-ATP1B1, ATP1A2-ATP1B1 and ATP1A3-ATP1B1 NKA isozymes. Post-translationally, glutathionylated. In terms of tissue distribution, isoform 1: Expressed mainly in differentiated cells (at protein level). Isoform 2: Expressed mainly in undifferentiated cells (at protein level).

It is found in the cell membrane. Associates with and regulates the activity of the sodium/potassium-transporting ATPase (NKA) which transports Na(+) out of the cell and K(+) into the cell. Reduces glutathionylation of the NKA beta-1 subunit ATP1B1, thus reversing glutathionylation-mediated inhibition of ATP1B1. Induces a hyperpolarization-activated chloride current when expressed in Xenopus oocytes. Its function is as follows. Decreases the apparent K+ and Na+ affinity of the sodium/potassium-transporting ATPase over a large range of membrane potentials. Functionally, decreases the apparent K+ affinity of the sodium/potassium-transporting ATPase only at slightly negative and positive membrane potentials and increases the apparent Na+ affinity over a large range of membrane potentials. This Homo sapiens (Human) protein is FXYD domain-containing ion transport regulator 3 (FXYD3).